A 456-amino-acid polypeptide reads, in one-letter code: Cysteine--tRNA ligase (456 aa).

A Zn(2+)-binding site is contributed by cysteine 28. The 'HIGH' region motif lies at 30–40 (ITVYDHCHLGH). Residues cysteine 209, histidine 234, and glutamate 238 each contribute to the Zn(2+) site. The 'KMSKS' region signature appears at 266–270 (KMAKS). Lysine 269 is an ATP binding site.

The protein belongs to the class-I aminoacyl-tRNA synthetase family. Monomer. The cofactor is Zn(2+).

The protein resides in the cytoplasm. It catalyses the reaction tRNA(Cys) + L-cysteine + ATP = L-cysteinyl-tRNA(Cys) + AMP + diphosphate. The sequence is that of Cysteine--tRNA ligase from Legionella pneumophila subsp. pneumophila (strain Philadelphia 1 / ATCC 33152 / DSM 7513).